The primary structure comprises 558 residues: GPI mannosyltransferase 3 (558 aa).

Transmembrane regions (helical) follow at residues 53–73, 81–101, 164–184, and 190–210; these read GLRS…LKLL, VWFA…VSVF, AYCG…LLTL, and VPFL…AVVL. N220 carries N-linked (GlcNAc...) asparagine glycosylation. The helical transmembrane segment at 234 to 254 threads the bilayer; sequence IVLTGLIVLVAVLGGVMVLDY. N-linked (GlcNAc...) asparagine glycosylation is present at N275. Helical transmembrane passes span 292-312, 323-343, 348-368, and 372-392; these read VLVG…LVLW, PVLG…LIDH, FVFV…VRWS, and AVVV…IYLM.

Belongs to the glycosyltransferase 22 family. PIGB subfamily.

Its subcellular location is the endoplasmic reticulum membrane. Its pathway is glycolipid biosynthesis; glycosylphosphatidylinositol-anchor biosynthesis. Its function is as follows. Mannosyltransferase involved in glycosylphosphatidylinositol-anchor biosynthesis. Transfers the third alpha-1,2-mannose to Man2-GlcN-acyl-PI during GPI precursor assembly. This Trypanosoma brucei brucei protein is GPI mannosyltransferase 3 (GPI10).